Reading from the N-terminus, the 226-residue chain is uncharacterized protein (226 aa).

Positions 1 to 18 (MRRIGLCISLLVTVLVMS) are cleaved as a signal peptide.

This is an uncharacterized protein from Bacillus subtilis (strain 168).